Here is a 436-residue protein sequence, read N- to C-terminus: Putative permease MJ0326 (436 aa).

12 consecutive transmembrane segments (helical) span residues 24-44 (LAGI…PQIL), 51-71 (FGAV…VMGL), 79-99 (LAPG…GMGI), 103-123 (VALG…LTKI), 139-159 (TAVG…GIIV), 171-191 (LMEP…ILVS), 194-214 (VIGA…ILGI), 235-255 (LDIM…FFFV), 322-342 (GFVS…YPVV), 345-365 (IPPY…MRSV), 381-401 (ITLL…LGFI), and 416-436 (VHWL…YLSG).

The protein belongs to the nucleobase:cation symporter-2 (NCS2) (TC 2.A.40) family. Azg-like subfamily.

It localises to the cell membrane. This is Putative permease MJ0326 from Methanocaldococcus jannaschii (strain ATCC 43067 / DSM 2661 / JAL-1 / JCM 10045 / NBRC 100440) (Methanococcus jannaschii).